The following is a 341-amino-acid chain: Heat-inducible transcription repressor HrcA (341 aa).

The protein belongs to the HrcA family.

In terms of biological role, negative regulator of class I heat shock genes (grpE-dnaK-dnaJ and groELS operons). Prevents heat-shock induction of these operons. The chain is Heat-inducible transcription repressor HrcA from Mycobacteroides abscessus (strain ATCC 19977 / DSM 44196 / CCUG 20993 / CIP 104536 / JCM 13569 / NCTC 13031 / TMC 1543 / L948) (Mycobacterium abscessus).